The primary structure comprises 647 residues: Putative lipase YDL109C (647 aa).

The active-site Charge relay system is the S274. Residues 502–523 (PPPSPTLYEGTAAKEGETRKTR) form a disordered region. Residues 513 to 523 (AAKEGETRKTR) show a composition bias toward basic and acidic residues.

It belongs to the putative lipase ROG1 family.

Involved in lipid metabolism. The chain is Putative lipase YDL109C from Saccharomyces cerevisiae (strain ATCC 204508 / S288c) (Baker's yeast).